Here is a 318-residue protein sequence, read N- to C-terminus: Formimidoylglutamase (318 aa).

The Mn(2+) site is built by H130, D155, H157, D159, D246, and D248.

Belongs to the arginase family. It depends on Mn(2+) as a cofactor.

It catalyses the reaction N-formimidoyl-L-glutamate + H2O = formamide + L-glutamate. Its pathway is amino-acid degradation; L-histidine degradation into L-glutamate; L-glutamate from N-formimidoyl-L-glutamate (hydrolase route): step 1/1. In terms of biological role, catalyzes the conversion of N-formimidoyl-L-glutamate to L-glutamate and formamide. This Photorhabdus laumondii subsp. laumondii (strain DSM 15139 / CIP 105565 / TT01) (Photorhabdus luminescens subsp. laumondii) protein is Formimidoylglutamase.